A 714-amino-acid polypeptide reads, in one-letter code: Fatty acid oxidation complex subunit alpha (714 aa).

The segment at 1 to 190 is enoyl-CoA hydratase; it reads MEMASVFTLN…KLGLVDDVVP (190 aa). Positions 306–714 are 3-hydroxyacyl-CoA dehydrogenase; sequence APLNSVGILG…FWKTTATDLQ (409 aa).

It in the N-terminal section; belongs to the enoyl-CoA hydratase/isomerase family. The protein in the central section; belongs to the 3-hydroxyacyl-CoA dehydrogenase family. In terms of assembly, heterotetramer of two alpha chains (FadJ) and two beta chains (FadI).

It localises to the cytoplasm. The catalysed reaction is a (3S)-3-hydroxyacyl-CoA = a (2E)-enoyl-CoA + H2O. The enzyme catalyses a 4-saturated-(3S)-3-hydroxyacyl-CoA = a (3E)-enoyl-CoA + H2O. It catalyses the reaction a (3S)-3-hydroxyacyl-CoA + NAD(+) = a 3-oxoacyl-CoA + NADH + H(+). It carries out the reaction (3S)-3-hydroxybutanoyl-CoA = (3R)-3-hydroxybutanoyl-CoA. It functions in the pathway lipid metabolism; fatty acid beta-oxidation. Functionally, catalyzes the formation of a hydroxyacyl-CoA by addition of water on enoyl-CoA. Also exhibits 3-hydroxyacyl-CoA epimerase and 3-hydroxyacyl-CoA dehydrogenase activities. This chain is Fatty acid oxidation complex subunit alpha, found in Escherichia coli O139:H28 (strain E24377A / ETEC).